The sequence spans 233 residues: UPF0128 protein MJ1463 (233 aa).

The protein belongs to the UPF0128 family.

The chain is UPF0128 protein MJ1463 from Methanocaldococcus jannaschii (strain ATCC 43067 / DSM 2661 / JAL-1 / JCM 10045 / NBRC 100440) (Methanococcus jannaschii).